Here is a 164-residue protein sequence, read N- to C-terminus: Cyclic pyranopterin monophosphate synthase (164 aa).

Substrate contacts are provided by residues 75-77 and 116-117; these read MCH and ME. Residue Asp131 is part of the active site.

The protein belongs to the MoaC family. Homohexamer; trimer of dimers.

It carries out the reaction (8S)-3',8-cyclo-7,8-dihydroguanosine 5'-triphosphate = cyclic pyranopterin phosphate + diphosphate. The protein operates within cofactor biosynthesis; molybdopterin biosynthesis. In terms of biological role, catalyzes the conversion of (8S)-3',8-cyclo-7,8-dihydroguanosine 5'-triphosphate to cyclic pyranopterin monophosphate (cPMP). The protein is Cyclic pyranopterin monophosphate synthase of Staphylococcus aureus (strain USA300).